Here is a 449-residue protein sequence, read N- to C-terminus: MKLTQRLSLRVRLTLIFLILVSITWAISSFVAWRKTTDNVDELFDTQLMLFARRLSTLDLNEINAPQRMAHTPKKLKHGHIDDDALAFAIFSADGKMLLHDGDNGQDIPYRYRREGFDNGYLKDDNDLWRFLWLNSADGKYRIVVGQEWDYREDMALAIVAAQLTPWLIALPFMLLILLLLLHRELRPLKKLAQALRFRSPESETPLDAKGVPSEVRPLVEALNQLFSRIHSMMVRERRFTSDAAHELRSPLAALKVQTEVAQLSGDDPLSRDKALTQLHAGIDRATRLVDQLLTLSRLDSLNNLQDVAEISLEELLQSAVMDIYHPAQQANIDVRLQLNAHDVIRTGQPLLLSLLVRNLLDNAIRYSPQGSVVDVTLHARSFTVRDNGPGVAPEILTHIGERFYRPPGQSVTGSGLGLSIVRRIATLHGMTVSFGNAAEGGFEAVVSW.

Topologically, residues 1-12 are cytoplasmic; that stretch reads MKLTQRLSLRVR. The helical transmembrane segment at 13 to 33 threads the bilayer; that stretch reads LTLIFLILVSITWAISSFVAW. At 34–161 the chain is on the periplasmic side; that stretch reads RKTTDNVDEL…REDMALAIVA (128 aa). Residues 162–182 form a helical membrane-spanning segment; it reads AQLTPWLIALPFMLLILLLLL. The 53-residue stretch at 183–235 folds into the HAMP domain; that stretch reads HRELRPLKKLAQALRFRSPESETPLDAKGVPSEVRPLVEALNQLFSRIHSMMV. Over 183-449 the chain is Cytoplasmic; it reads HRELRPLKKL…EGGFEAVVSW (267 aa). The Histidine kinase domain occupies 243 to 449; that stretch reads DAAHELRSPL…EGGFEAVVSW (207 aa). H246 bears the Phosphohistidine; by autocatalysis mark.

It is found in the cell inner membrane. It carries out the reaction ATP + protein L-histidine = ADP + protein N-phospho-L-histidine.. Its function is as follows. Member of a two-component regulatory system QseB/QseC. Activates the flagella regulon by activating transcription of FlhDC. May activate QseB by phosphorylation. This Salmonella typhimurium (strain LT2 / SGSC1412 / ATCC 700720) protein is Sensor protein QseC (qseC).